A 1048-amino-acid polypeptide reads, in one-letter code: Self-sufficient cytochrome P450 monooxygenase CYP505E4 (1048 aa).

Cysteine 405 contributes to the heme binding site. The Flavodoxin-like domain occupies 499–640 (VSFFYGSNSG…DLEVWEETNL (142 aa)). FMN contacts are provided by residues 505-509 (SNSGT) and 584-616 (VFGC…TRLA). In terms of domain architecture, FAD-binding FR-type spans 678–906 (RDLIEAKVTA…RPAKDAFHLP (229 aa)).

It in the N-terminal section; belongs to the cytochrome P450 family. FAD is required as a cofactor. FMN serves as cofactor. It depends on heme as a cofactor.

The enzyme catalyses 2 oxidized [cytochrome P450] + NADPH = 2 reduced [cytochrome P450] + NADP(+) + H(+). It catalyses the reaction an organic molecule + reduced [NADPH--hemoprotein reductase] + O2 = an alcohol + oxidized [NADPH--hemoprotein reductase] + H2O + H(+). It carries out the reaction dodecanoate + reduced [NADPH--hemoprotein reductase] + O2 = 5-hydroxydodecanoate + oxidized [NADPH--hemoprotein reductase] + H2O + H(+). The catalysed reaction is tetradecanoate + reduced [NADPH--hemoprotein reductase] + O2 = 7-hydroxytetradecanoate + oxidized [NADPH--hemoprotein reductase] + H2O + H(+). The enzyme catalyses dodecan-1-ol + reduced [NADPH--hemoprotein reductase] + O2 = 1,5-dodecanediol + oxidized [NADPH--hemoprotein reductase] + H2O + H(+). It catalyses the reaction dodecan-1-ol + reduced [NADPH--hemoprotein reductase] + O2 = 1,4-dodecanediol + oxidized [NADPH--hemoprotein reductase] + H2O + H(+). It carries out the reaction dodecan-1-ol + reduced [NADPH--hemoprotein reductase] + O2 = 1,6-dodecanediol + oxidized [NADPH--hemoprotein reductase] + H2O + H(+). Its function is as follows. Self-sufficient cytochrome P450 monooxygenase that catalyzes the regioselective in-chain hydroxylation of alkanes, fatty alcohols, and fatty acids at the omega-7 position. Performs hydroxylation of C10-C16 n-alkanes and C12 and C14 fatty alcohols; and thereby enables the one step biocatalytic synthesis of rare alcohols such as 5-dodecanol and 7-tetradecanol. Converts 1-dodecanol into 1,5-dodecanediol as major product with very little sub-terminally hydroxylated products with the 1,4-dodecanediol and 1,6-dodecanediol more abundant. Converts dodecanoic acid to 5-hydroxydodecanoic acid which can be further converted into delta-dodecalactone by lactonization of the 5-hydroxy acid at low pH. Also gives sub-terminal hydroxylation of dodecanoic acid with 9-hydroxydodecanoic acid being the second most abundant product. This Penicillium expansum (Blue mold rot fungus) protein is Self-sufficient cytochrome P450 monooxygenase CYP505E4.